The primary structure comprises 225 residues: Uracil-DNA glycosylase (225 aa).

The active-site Proton acceptor is Asp-65.

The protein belongs to the uracil-DNA glycosylase (UDG) superfamily. UNG family.

It localises to the cytoplasm. It carries out the reaction Hydrolyzes single-stranded DNA or mismatched double-stranded DNA and polynucleotides, releasing free uracil.. In terms of biological role, excises uracil residues from the DNA which can arise as a result of misincorporation of dUMP residues by DNA polymerase or due to deamination of cytosine. The chain is Uracil-DNA glycosylase from Alkaliphilus oremlandii (strain OhILAs) (Clostridium oremlandii (strain OhILAs)).